A 624-amino-acid polypeptide reads, in one-letter code: DNA-directed RNA polymerase III subunit rpc-3 (624 aa).

2 disordered regions span residues 229–260 and 373–418; these read KRKL…EEDL and LAPK…ARMS. A compositionally biased stretch (acidic residues) spans 385-403; it reads DDSDDDEEDGDYSDSDEEM. A leucine-zipper region spans residues 551-572; sequence CYATMVHCLQVLEVRRQKDKDV.

Belongs to the RNA polymerase beta chain family. As to quaternary structure, component of the RNA polymerase III (Pol III) complex consisting of 17 subunits.

It localises to the nucleus. Functionally, DNA-dependent RNA polymerase catalyzes the transcription of DNA into RNA using the four ribonucleoside triphosphates as substrates. Specific core component of RNA polymerase III which synthesizes small RNAs, such as 5S rRNA and tRNAs. The chain is DNA-directed RNA polymerase III subunit rpc-3 (rpc-82) from Neurospora crassa (strain ATCC 24698 / 74-OR23-1A / CBS 708.71 / DSM 1257 / FGSC 987).